The chain runs to 428 residues: Cytochrome bc complex cytochrome b subunit (428 aa).

Composition is skewed to low complexity over residues 1-15 and 21-52; these read MAEN…TAPA and APGA…AAAP. The interval 1-72 is disordered; it reads MAENTPKPAA…RPDPNPFKDS (72 aa). The span at 59–72 shows a compositional bias: basic and acidic residues; sequence PPVDRPDPNPFKDS. The helical transmembrane segment at 110–130 threads the bilayer; that stretch reads YFGGLGLFFFVIQILTGLLLL. 2 residues coordinate heme b: His161 and His175. 6 consecutive transmembrane segments (helical) span residues 162–182, 193–213, 260–280, 312–331, 369–389, and 401–421; these read AWSA…TFFM, WVSG…GYLL, LHVV…LTLV, GIGW…MFPW, ELLA…VPFI, and IFTI…YRVY. Positions 261 and 276 each coordinate heme b.

The protein belongs to the cytochrome b family. Requires heme b as cofactor.

The protein resides in the cell inner membrane. In terms of biological role, component of the green S-bacteria bc complex, which consists of the Rieske protein and cytochrome b subunit but appears to lack a cytochrome c1-equivalent. This complex has a comparatively low redox potential. The protein is Cytochrome bc complex cytochrome b subunit (petB) of Chlorobaculum thiosulfatiphilum (Chlorobium limicola f.sp. thiosulfatophilum).